Consider the following 1056-residue polypeptide: 120.7 kDa protein in NOF-FB transposable element (1056 aa).

The segment at 716 to 749 (KTIKPTEGNDAEDNDTDDENKEMDLSEQPKEKPR) is disordered. A compositionally biased stretch (acidic residues) spans 724 to 736 (NDAEDNDTDDENK). The segment covering 737–749 (EMDLSEQPKEKPR) has biased composition (basic and acidic residues).

The protein resides in the nucleus. May be involved in the transposition of NOF-FB and other FB elements. The polypeptide is 120.7 kDa protein in NOF-FB transposable element (NOF) (Drosophila melanogaster (Fruit fly)).